The following is a 189-amino-acid chain: Peptidyl-tRNA hydrolase (189 aa).

His-14 contacts tRNA. His-19 functions as the Proton acceptor in the catalytic mechanism. The tRNA site is built by Tyr-64, Asn-66, and Asn-112.

It belongs to the PTH family. In terms of assembly, monomer.

Its subcellular location is the cytoplasm. The enzyme catalyses an N-acyl-L-alpha-aminoacyl-tRNA + H2O = an N-acyl-L-amino acid + a tRNA + H(+). Functionally, hydrolyzes ribosome-free peptidyl-tRNAs (with 1 or more amino acids incorporated), which drop off the ribosome during protein synthesis, or as a result of ribosome stalling. Catalyzes the release of premature peptidyl moieties from peptidyl-tRNA molecules trapped in stalled 50S ribosomal subunits, and thus maintains levels of free tRNAs and 50S ribosomes. In Chlorobium phaeobacteroides (strain BS1), this protein is Peptidyl-tRNA hydrolase.